The sequence spans 21 residues: Pedibin (21 aa).

A disordered region spans residues 1 to 21 (AGEDVSHELEEKEKALANHSE).

In terms of biological role, morphogenetically active peptide. Active in foot development. The polypeptide is Pedibin (Hydra vulgaris (Hydra)).